We begin with the raw amino-acid sequence, 285 residues long: Complement C1q tumor necrosis factor-related protein 2 (285 aa).

Residues 1 to 15 (MIPWVLLACALPCAA) form the signal peptide. A disordered region spans residues 33-144 (QLVCSLPGPQ…PGLPGPCSCG (112 aa)). A Collagen-like domain is found at 40-141 (GPQGPPGPPG…KGEPGLPGPC (102 aa)). Over residues 41 to 51 (PQGPPGPPGAP) the composition is skewed to pro residues. Residues 53–65 (PSGMMGRMGFPGK) show a composition bias toward low complexity. Residues 66-78 (DGQDGHDGDRGDS) show a composition bias toward basic and acidic residues. The span at 84 to 120 (PGRTGNRGKPGPKGKAGAIGRAGPRGPKGVNGTPGKH) shows a compositional bias: low complexity. Residues 145-281 (SGHTKSAFSV…GFLIYADQDD (137 aa)) enclose the C1q domain.

May interact with ERFE. Expressed in adipose tissue.

The protein resides in the secreted. Involved in the regulation of lipid metabolism in adipose tissue and liver. In Homo sapiens (Human), this protein is Complement C1q tumor necrosis factor-related protein 2 (C1QTNF2).